We begin with the raw amino-acid sequence, 433 residues long: MSLMTKLGFRALVASCLIAAGGAAHAQVNVLITGVGSTQFPIATANFVNEASLPQQVTSVVRGDLARSGKFSNVDAGSTPVPETASVDFGAWKAKGANAFVAGSVNREPNGQYKVNFILYDTVKQQSLGGLSLTTSNDNEGMRKTGHKIADYIYQKLLGVRGVFNTRLSYVQRTGNVYKLLISDSDGQNAIPALTSKEPIISPAWSPSGTKVAYVSFELRKPVVYIHDLPTGRRYVISNQKGNNSAPAWSPDGQTLAVALSLTGNTQIYSVSSTGTGLRRLTRSSSIDTEPFYSPDGKWIYFTSDRGGAPQIYRMPAEGESAGAAQRVTFTGSYNTSPRVSPDGKLLAYISRTGGGFKLYVQDLQSGAANAVTNTTRDESPSFAANGQYILYATQSGGRSVLAAVPSDGSAPPQILSVQGGAIREPSWGPFMQ.

A signal peptide spans 1 to 26 (MSLMTKLGFRALVASCLIAAGGAAHA).

Belongs to the TolB family. In terms of assembly, the Tol-Pal system is composed of five core proteins: the inner membrane proteins TolA, TolQ and TolR, the periplasmic protein TolB and the outer membrane protein Pal. They form a network linking the inner and outer membranes and the peptidoglycan layer.

Its subcellular location is the periplasm. Its function is as follows. Part of the Tol-Pal system, which plays a role in outer membrane invagination during cell division and is important for maintaining outer membrane integrity. The polypeptide is Tol-Pal system protein TolB (Burkholderia pseudomallei (strain 1710b)).